Consider the following 237-residue polypeptide: Phosphatidylserine decarboxylase proenzyme (237 aa).

The active-site Schiff-base intermediate with substrate; via pyruvic acid is the S206. The residue at position 206 (S206) is a Pyruvic acid (Ser); by autocatalysis.

It belongs to the phosphatidylserine decarboxylase family. PSD-A subfamily. In terms of assembly, heterodimer of a large membrane-associated beta subunit and a small pyruvoyl-containing alpha subunit. Requires pyruvate as cofactor. Post-translationally, is synthesized initially as an inactive proenzyme. Formation of the active enzyme involves a self-maturation process in which the active site pyruvoyl group is generated from an internal serine residue via an autocatalytic post-translational modification. Two non-identical subunits are generated from the proenzyme in this reaction, and the pyruvate is formed at the N-terminus of the alpha chain, which is derived from the carboxyl end of the proenzyme. The post-translation cleavage follows an unusual pathway, termed non-hydrolytic serinolysis, in which the side chain hydroxyl group of the serine supplies its oxygen atom to form the C-terminus of the beta chain, while the remainder of the serine residue undergoes an oxidative deamination to produce ammonia and the pyruvoyl prosthetic group on the alpha chain.

It is found in the cell membrane. The catalysed reaction is a 1,2-diacyl-sn-glycero-3-phospho-L-serine + H(+) = a 1,2-diacyl-sn-glycero-3-phosphoethanolamine + CO2. It functions in the pathway phospholipid metabolism; phosphatidylethanolamine biosynthesis; phosphatidylethanolamine from CDP-diacylglycerol: step 2/2. Catalyzes the formation of phosphatidylethanolamine (PtdEtn) from phosphatidylserine (PtdSer). This is Phosphatidylserine decarboxylase proenzyme from Rhodococcus erythropolis (strain PR4 / NBRC 100887).